The primary structure comprises 310 residues: p-hydroxybenzoic acid efflux pump subunit AaeA (310 aa).

A helical transmembrane segment spans residues 12–32 (AITVVLVILAFIAIFNAWVYY).

It belongs to the membrane fusion protein (MFP) (TC 8.A.1) family.

The protein resides in the cell inner membrane. In terms of biological role, forms an efflux pump with AaeB. This chain is p-hydroxybenzoic acid efflux pump subunit AaeA, found in Escherichia coli O17:K52:H18 (strain UMN026 / ExPEC).